Here is a 375-residue protein sequence, read N- to C-terminus: Chaperone protein DnaJ (375 aa).

A J domain is found at 5–70 (DYYEVLGVSR…EKRARYDRFG (66 aa)). The segment at 136–214 (GDEVTLRIPK…CRGAGQVQDI (79 aa)) adopts a CR-type zinc-finger fold. Zn(2+)-binding residues include cysteine 149, cysteine 152, cysteine 166, cysteine 169, cysteine 188, cysteine 191, cysteine 202, and cysteine 205. CXXCXGXG motif repeat units lie at residues 149–156 (CPDCSGSG), 166–173 (CPQCGGSG), 188–195 (CSACRGEG), and 202–209 (CPRCRGAG).

This sequence belongs to the DnaJ family. In terms of assembly, homodimer. Requires Zn(2+) as cofactor.

It localises to the cytoplasm. In terms of biological role, participates actively in the response to hyperosmotic and heat shock by preventing the aggregation of stress-denatured proteins and by disaggregating proteins, also in an autonomous, DnaK-independent fashion. Unfolded proteins bind initially to DnaJ; upon interaction with the DnaJ-bound protein, DnaK hydrolyzes its bound ATP, resulting in the formation of a stable complex. GrpE releases ADP from DnaK; ATP binding to DnaK triggers the release of the substrate protein, thus completing the reaction cycle. Several rounds of ATP-dependent interactions between DnaJ, DnaK and GrpE are required for fully efficient folding. Also involved, together with DnaK and GrpE, in the DNA replication of plasmids through activation of initiation proteins. This is Chaperone protein DnaJ from Oleidesulfovibrio alaskensis (strain ATCC BAA-1058 / DSM 17464 / G20) (Desulfovibrio alaskensis).